A 167-amino-acid polypeptide reads, in one-letter code: Small ribosomal subunit protein uS5 (167 aa).

The 64-residue stretch at Leu-12 to Val-75 folds into the S5 DRBM domain.

Belongs to the universal ribosomal protein uS5 family. As to quaternary structure, part of the 30S ribosomal subunit. Contacts proteins S4 and S8.

Functionally, with S4 and S12 plays an important role in translational accuracy. Located at the back of the 30S subunit body where it stabilizes the conformation of the head with respect to the body. The sequence is that of Small ribosomal subunit protein uS5 from Hahella chejuensis (strain KCTC 2396).